A 405-amino-acid polypeptide reads, in one-letter code: L-cysteine:1D-myo-inositol 2-amino-2-deoxy-alpha-D-glucopyranoside ligase (405 aa).

A Zn(2+)-binding site is contributed by Cys-43. L-cysteinyl-5'-AMP contacts are provided by residues 43 to 46, Thr-58, and 81 to 83; these read CGIT and NIT. A 'HIGH' region motif is present at residues 45-55; the sequence is ITPYDATHLGH. Residues 187–192 carry the 'ERGGDP' region motif; the sequence is ERGGDP. Trp-227 lines the L-cysteinyl-5'-AMP pocket. Zn(2+) is bound at residue Cys-231. 249 to 251 contacts L-cysteinyl-5'-AMP; that stretch reads GSD. A Zn(2+)-binding site is contributed by His-256. An L-cysteinyl-5'-AMP-binding site is contributed by Ile-283. Residues 289 to 293 carry the 'KMSKS' region motif; the sequence is KMSKS.

It belongs to the class-I aminoacyl-tRNA synthetase family. MshC subfamily. In terms of assembly, monomer. Zn(2+) serves as cofactor.

The catalysed reaction is 1D-myo-inositol 2-amino-2-deoxy-alpha-D-glucopyranoside + L-cysteine + ATP = 1D-myo-inositol 2-(L-cysteinylamino)-2-deoxy-alpha-D-glucopyranoside + AMP + diphosphate + H(+). Its function is as follows. Catalyzes the ATP-dependent condensation of GlcN-Ins and L-cysteine to form L-Cys-GlcN-Ins. The chain is L-cysteine:1D-myo-inositol 2-amino-2-deoxy-alpha-D-glucopyranoside ligase from Nakamurella multipartita (strain ATCC 700099 / DSM 44233 / CIP 104796 / JCM 9543 / NBRC 105858 / Y-104) (Microsphaera multipartita).